The chain runs to 126 residues: Large ribosomal subunit protein bL12 (126 aa).

The protein belongs to the bacterial ribosomal protein bL12 family. Homodimer. Part of the ribosomal stalk of the 50S ribosomal subunit. Forms a multimeric L10(L12)X complex, where L10 forms an elongated spine to which 2 to 4 L12 dimers bind in a sequential fashion. Binds GTP-bound translation factors.

In terms of biological role, forms part of the ribosomal stalk which helps the ribosome interact with GTP-bound translation factors. Is thus essential for accurate translation. This is Large ribosomal subunit protein bL12 from Acidobacterium capsulatum (strain ATCC 51196 / DSM 11244 / BCRC 80197 / JCM 7670 / NBRC 15755 / NCIMB 13165 / 161).